Here is a 328-residue protein sequence, read N- to C-terminus: DNA-directed RNA polymerase subunit alpha (328 aa).

Positions 1 to 231 (MIYQMQMPEK…EHVSLFANFS (231 aa)) are alpha N-terminal domain (alpha-NTD). The tract at residues 252 to 328 (MRKMLLTRIE…MDITKYQMKG (77 aa)) is alpha C-terminal domain (alpha-CTD).

The protein belongs to the RNA polymerase alpha chain family. As to quaternary structure, homodimer. The RNAP catalytic core consists of 2 alpha, 1 beta, 1 beta' and 1 omega subunit. When a sigma factor is associated with the core the holoenzyme is formed, which can initiate transcription.

It catalyses the reaction RNA(n) + a ribonucleoside 5'-triphosphate = RNA(n+1) + diphosphate. Its function is as follows. DNA-dependent RNA polymerase catalyzes the transcription of DNA into RNA using the four ribonucleoside triphosphates as substrates. This Chlorobium phaeobacteroides (strain BS1) protein is DNA-directed RNA polymerase subunit alpha.